We begin with the raw amino-acid sequence, 809 residues long: Ubiquitin carboxyl-terminal hydrolase 1 (809 aa).

The region spanning alanine 101–aspartate 738 is the USP domain. Cysteine 110 functions as the Nucleophile in the catalytic mechanism. The interval asparagine 143 to proline 195 is disordered. The segment covering lysine 162–serine 183 has biased composition (basic residues). Residues serine 184–glutamate 194 are compositionally biased toward basic and acidic residues. 3 positions are modified to phosphoserine: serine 530, serine 531, and serine 555. Residues alanine 569–glutamate 596 are disordered. Serine 618 and serine 638 each carry phosphoserine. Threonine 652 bears the Phosphothreonine mark. Phosphoserine is present on residues serine 653, serine 654, and serine 670. Histidine 697 (proton acceptor) is an active-site residue. Positions leucine 750–asparagine 809 are disordered. At serine 755 the chain carries Phosphoserine. Residues glutamine 765–glutamine 777 are compositionally biased toward basic and acidic residues. Acidic residues predominate over residues glutamate 778 to glutamine 789. Residues glutamate 790–asparagine 809 show a composition bias toward basic and acidic residues.

This sequence belongs to the peptidase C19 family.

It carries out the reaction Thiol-dependent hydrolysis of ester, thioester, amide, peptide and isopeptide bonds formed by the C-terminal Gly of ubiquitin (a 76-residue protein attached to proteins as an intracellular targeting signal).. Its function is as follows. Has an ATP-independent isopeptidase activity, cleaving at the C-terminus of the ubiquitin moiety in natural or engineered linear fusion proteins, irrespective of their size or the presence of an N-terminal extension to ubiquitin. This is Ubiquitin carboxyl-terminal hydrolase 1 (UBP1) from Saccharomyces cerevisiae (strain ATCC 204508 / S288c) (Baker's yeast).